Consider the following 199-residue polypeptide: Large ribosomal subunit protein bL25 (199 aa).

This sequence belongs to the bacterial ribosomal protein bL25 family. CTC subfamily. As to quaternary structure, part of the 50S ribosomal subunit; part of the 5S rRNA/L5/L18/L25 subcomplex. Contacts the 5S rRNA. Binds to the 5S rRNA independently of L5 and L18.

This is one of the proteins that binds to the 5S RNA in the ribosome where it forms part of the central protuberance. This is Large ribosomal subunit protein bL25 from Chlorobaculum tepidum (strain ATCC 49652 / DSM 12025 / NBRC 103806 / TLS) (Chlorobium tepidum).